We begin with the raw amino-acid sequence, 527 residues long: L-amino-acid oxidase (527 aa).

The first 27 residues, 1–27, serve as a signal peptide directing secretion; sequence MDLHRAPWKSSAAAAVLLLALFSGAAA. The cysteines at positions 37 and 200 are disulfide-linked. N-linked (GlcNAc...) asparagine glycosylation is present at asparagine 58. FAD contacts are provided by residues 70-71, 90-91, arginine 98, 114-117, and valine 288; these read VA, EA, and GAMR. Residue arginine 117 participates in substrate binding. A glycan (N-linked (GlcNAc...) asparagine) is linked at asparagine 393. Residue tyrosine 403 participates in substrate binding. Residues glutamate 485 and 492-497 contribute to the FAD site; that span reads AWMESA. 492 to 493 lines the substrate pocket; that stretch reads AW.

In terms of assembly, homodimer. Requires FAD as cofactor. In terms of tissue distribution, expression mainly observed in plasma, spleen, kidney and gills with low levels detected in blood and no expression detected in brain, liver, heart, muscle or intestine (at protein level).

It localises to the secreted. It catalyses the reaction an L-alpha-amino acid + O2 + H2O = a 2-oxocarboxylate + H2O2 + NH4(+). Its function is as follows. Inhibits the growth of both Gram-negative and Gram-positive bacteria. Displays strong antibacterial activity towards V.cholerae and E.tarda. Causes deformation of the surface of S.aureus and the formation of pores on the surface of E.coli. Strong antiparasitic activity is seen towards C.irritans, T.brucei and I.multifiliis. Cilia of treated theronts are lost and the macronucleus swells, inducing cell membrane rupture and efflux of the cytoplasm. The protein is L-amino-acid oxidase of Siganus canaliculatus (White-spotted spinefoot).